Reading from the N-terminus, the 434-residue chain is Angio-associated migratory cell protein (434 aa).

A disordered region spans residues 1–63 (MESESESGAA…EEEEEEGNEE (63 aa)). The residue at position 20 (Ser-20) is a Phosphoserine. Residues 39–62 (DPDDLAQEMEDVDFEEEEEEEGNE) are compositionally biased toward acidic residues. WD repeat units lie at residues 89–129 (LHSA…LLFE), 132–171 (GHKD…EVWS), 173–212 (EAGD…KTFQ), 214–254 (PNCP…HVLK), 258–299 (GHQG…GVFR), 315–354 (SESN…LRHQ), 356–395 (QHQS…LLTD), and 398–433 (GHTA…QRPD).

It is found in the cell membrane. Its subcellular location is the cytoplasm. Functionally, plays a role in angiogenesis and cell migration. In smooth muscle cell migration, may act through the RhoA pathway. The protein is Angio-associated migratory cell protein (AAMP) of Pongo abelii (Sumatran orangutan).